Consider the following 58-residue polypeptide: UPF0337 protein OB2685 (58 aa).

Basic and acidic residues-rich tracts occupy residues 1-22 (MSDGMKDKAKAIGKKIKGEAKD) and 30-46 (DPQRKAEGKRDKAKGEA). The tract at residues 1–58 (MSDGMKDKAKAIGKKIKGEAKDQWGSATDDPQRKAEGKRDKAKGEAQDTIADAKNNNK) is disordered.

This sequence belongs to the UPF0337 (CsbD) family.

This chain is UPF0337 protein OB2685, found in Oceanobacillus iheyensis (strain DSM 14371 / CIP 107618 / JCM 11309 / KCTC 3954 / HTE831).